Reading from the N-terminus, the 229-residue chain is Urease accessory protein UreF (229 aa).

Belongs to the UreF family. As to quaternary structure, ureD, UreF and UreG form a complex that acts as a GTP-hydrolysis-dependent molecular chaperone, activating the urease apoprotein by helping to assemble the nickel containing metallocenter of UreC. The UreE protein probably delivers the nickel.

It localises to the cytoplasm. In terms of biological role, required for maturation of urease via the functional incorporation of the urease nickel metallocenter. This chain is Urease accessory protein UreF, found in Alcanivorax borkumensis (strain ATCC 700651 / DSM 11573 / NCIMB 13689 / SK2).